The sequence spans 177 residues: Austinoid biosynthesis clusters protein F (177 aa).

Belongs to the trt14 isomerase family. In terms of assembly, homodimer.

It functions in the pathway secondary metabolite biosynthesis; terpenoid biosynthesis. In terms of biological role, part of the gene cluster B that mediates the biosynthesis of austinol and dehydroaustinol, two fungal meroterpenoids. The first step of the pathway is the synthesis of 3,5-dimethylorsellinic acid by the polyketide synthase ausA. 3,5-dimethylorsellinic acid is then prenylated by the polyprenyl transferase ausN. Further epoxidation by the FAD-dependent monooxygenase ausM and cyclization by the probable terpene cyclase ausL lead to the formation of protoaustinoid A. Protoaustinoid A is then oxidized to spiro-lactone preaustinoid A3 by the combined action of the FAD-binding monooxygenases ausB and ausC, and the dioxygenase ausE. Acid-catalyzed keto-rearrangement and ring contraction of the tetraketide portion of preaustinoid A3 by ausJ lead to the formation of preaustinoid A4. The aldo-keto reductase ausK, with the help of ausH, is involved in the next step by transforming preaustinoid A4 into isoaustinone which is in turn hydroxylated by the P450 monooxygenase ausI to form austinolide. Finally, the cytochrome P450 monooxygenase ausG modifies austinolide to austinol. Austinol can be further modified to dehydroaustinol which forms a diffusible complex with diorcinol that initiates conidiation. Due to genetic rearrangements of the clusters and the subsequent loss of some enzymes, the end products of the Emericella nidulans austinoid biosynthesis clusters are austinol and dehydroaustinol, even if additional enzymes, such as the O-acetyltransferase ausQ and the cytochrome P450 monooxygenase ausR are still functional. This Emericella nidulans (strain FGSC A4 / ATCC 38163 / CBS 112.46 / NRRL 194 / M139) (Aspergillus nidulans) protein is Austinoid biosynthesis clusters protein F.